Here is a 152-residue protein sequence, read N- to C-terminus: Bacchus (152 aa).

Positions aspartate 29 to alanine 41 are enriched in basic and acidic residues. Residues aspartate 29–alanine 152 are disordered. A compositionally biased stretch (low complexity) spans alanine 42 to aspartate 51. Residues glutamate 72–lysine 89 show a composition bias toward basic and acidic residues. Residues glycine 99 to alanine 152 are compositionally biased toward acidic residues.

As to expression, expressed in the brain.

It is found in the nucleus. In terms of biological role, negatively regulates tyramine beta-hydroxylase tbh and thus the conversion of tyramine (TA) to octopamine (OA). In tyrosine decarboxylase 2 (Tdc2) neurons, acts in an amine-mediated signaling pathway to negatively regulate acute ethanol sensitivity probably via tbh-mediated depletion of TA. The polypeptide is Bacchus (Drosophila melanogaster (Fruit fly)).